The following is a 416-amino-acid chain: MSYAIETFDPEIFQAIENERERQTNHLEMIASENFTIPAVMEAMGSVFTNKYAEGYPHKRYYGGCEYADVVEQLAIDRACELFDCNYANVQPHSGSQANGAVYAALIKAGDKILGMDLSHGGHLTHGSKPSFSGKNYHSFTYGVELDGRINYDRVMEIAKIVQPKIIVCGASAYAREIDFKKFREIADEVGAILFADIAHIAGLVCAGEHPSPFPYADVVTTTTHKTLAGPRGGMIMTNDEDIAKKINSAIFPGLQGGPLVHVIAAKAVGFKHNLSDEWKVYAKQVKANASILADVLIKRGYDVVSGGTDNHLVLVSFLDKEFSGKDADAALGAAGITVNKNTVPGETRSPFVTSGIRIGSPALTSRGMKEIEFEIIANKIADVLDNVNDSELHAKIKEEMKELASNFVIYDKPIY.

Residues leucine 118 and 122–124 each bind (6S)-5,6,7,8-tetrahydrofolate; that span reads GHL. Lysine 226 is subject to N6-(pyridoxal phosphate)lysine. 350 to 352 serves as a coordination point for (6S)-5,6,7,8-tetrahydrofolate; it reads SPF.

Belongs to the SHMT family. As to quaternary structure, homodimer. The cofactor is pyridoxal 5'-phosphate.

It is found in the cytoplasm. It catalyses the reaction (6R)-5,10-methylene-5,6,7,8-tetrahydrofolate + glycine + H2O = (6S)-5,6,7,8-tetrahydrofolate + L-serine. Its pathway is one-carbon metabolism; tetrahydrofolate interconversion. It participates in amino-acid biosynthesis; glycine biosynthesis; glycine from L-serine: step 1/1. Its function is as follows. Catalyzes the reversible interconversion of serine and glycine with tetrahydrofolate (THF) serving as the one-carbon carrier. This reaction serves as the major source of one-carbon groups required for the biosynthesis of purines, thymidylate, methionine, and other important biomolecules. Also exhibits THF-independent aldolase activity toward beta-hydroxyamino acids, producing glycine and aldehydes, via a retro-aldol mechanism. This is Serine hydroxymethyltransferase from Sulfurovum sp. (strain NBC37-1).